The primary structure comprises 633 residues: Protein BZZ1 (633 aa).

Residues 5 to 271 enclose the F-BAR domain; that stretch reads LSIGNEIKDS…VVKQNKPSLN (267 aa). Residues 138 to 210 are a coiled coil; it reads DMVNKKDNIY…INQANRTKDK (73 aa). 4 positions are modified to phosphoserine: S327, S463, S472, and S476. Residues 429-495 form a disordered region; sequence VDSKPSSGGS…KKTTQNSSDD (67 aa). Positions 474–493 are enriched in low complexity; the sequence is NNSIRTTSTNNTKKTTQNSS. SH3 domains lie at 493–555 and 577–633; these read SDDG…ISSA and LPVR…SYCK.

It belongs to the BZZ1 family. In terms of assembly, interacts with LAS17 and MYO5.

It is found in the cytoplasm. Its subcellular location is the cytoskeleton. The protein localises to the actin patch. Plays a role in endocytosis and trafficking to the vacuole. Functions with type I myosins to restore polarity of the actin cytoskeleton after NaCl stress. This is Protein BZZ1 (BZZ1) from Saccharomyces cerevisiae (strain ATCC 204508 / S288c) (Baker's yeast).